Reading from the N-terminus, the 200-residue chain is Small ribosomal subunit protein uS4 (200 aa).

Residues 20-41 (TGTGKELDKRPYAPGQHGPNQR) form a disordered region. Residues 92–152 (SRLDNLVYRL…EKSKNLDVVK (61 aa)) form the S4 RNA-binding domain.

This sequence belongs to the universal ribosomal protein uS4 family. As to quaternary structure, part of the 30S ribosomal subunit. Contacts protein S5. The interaction surface between S4 and S5 is involved in control of translational fidelity.

In terms of biological role, one of the primary rRNA binding proteins, it binds directly to 16S rRNA where it nucleates assembly of the body of the 30S subunit. With S5 and S12 plays an important role in translational accuracy. In Oceanobacillus iheyensis (strain DSM 14371 / CIP 107618 / JCM 11309 / KCTC 3954 / HTE831), this protein is Small ribosomal subunit protein uS4.